A 124-amino-acid chain; its full sequence is Large ribosomal subunit protein bL12 (124 aa).

It belongs to the bacterial ribosomal protein bL12 family. As to quaternary structure, homodimer. Part of the ribosomal stalk of the 50S ribosomal subunit. Forms a multimeric L10(L12)X complex, where L10 forms an elongated spine to which 2 to 4 L12 dimers bind in a sequential fashion. Binds GTP-bound translation factors.

Functionally, forms part of the ribosomal stalk which helps the ribosome interact with GTP-bound translation factors. Is thus essential for accurate translation. In Xanthobacter autotrophicus (strain ATCC BAA-1158 / Py2), this protein is Large ribosomal subunit protein bL12.